A 351-amino-acid polypeptide reads, in one-letter code: Phosphoribosylformylglycinamidine cyclo-ligase (351 aa).

It belongs to the AIR synthase family.

It localises to the cytoplasm. It carries out the reaction 2-formamido-N(1)-(5-O-phospho-beta-D-ribosyl)acetamidine + ATP = 5-amino-1-(5-phospho-beta-D-ribosyl)imidazole + ADP + phosphate + H(+). It functions in the pathway purine metabolism; IMP biosynthesis via de novo pathway; 5-amino-1-(5-phospho-D-ribosyl)imidazole from N(2)-formyl-N(1)-(5-phospho-D-ribosyl)glycinamide: step 2/2. This Burkholderia pseudomallei (strain 1710b) protein is Phosphoribosylformylglycinamidine cyclo-ligase.